A 776-amino-acid chain; its full sequence is U3 small nucleolar RNA-associated protein 4 (776 aa).

WD repeat units follow at residues 35–40 (RCRFVD), 132–169 (LPLR…VLID), 178–214 (EHDT…RIWS), 230–266 (KVDK…KFWD), 271–308 (TLNQ…FQFS), and 417–452 (VCKL…KVFH).

Interacts with snoRNA U3. Interacts with MPP10. Component of the ribosomal small subunit (SSU) processome composed of at least 40 protein subunits and snoRNA U3. In the absence of snoRNA3, forms a complex with other t-UTPs. This complex can associate with pre-18S ribosomal RNAs.

Its subcellular location is the nucleus. The protein resides in the nucleolus. Its function is as follows. Involved in nucleolar processing of pre-18S ribosomal RNA. Required for optimal pre-ribosomal RNA transcription by RNA polymerase I together with a subset of U3 proteins required for transcription (t-UTPs). The polypeptide is U3 small nucleolar RNA-associated protein 4 (UTP4) (Saccharomyces cerevisiae (strain ATCC 204508 / S288c) (Baker's yeast)).